A 366-amino-acid chain; its full sequence is Transaldolase (366 aa).

Lysine 140 acts as the Schiff-base intermediate with substrate in catalysis.

It belongs to the transaldolase family. Type 2 subfamily.

Its subcellular location is the cytoplasm. It carries out the reaction D-sedoheptulose 7-phosphate + D-glyceraldehyde 3-phosphate = D-erythrose 4-phosphate + beta-D-fructose 6-phosphate. Its pathway is carbohydrate degradation; pentose phosphate pathway; D-glyceraldehyde 3-phosphate and beta-D-fructose 6-phosphate from D-ribose 5-phosphate and D-xylulose 5-phosphate (non-oxidative stage): step 2/3. In terms of biological role, transaldolase is important for the balance of metabolites in the pentose-phosphate pathway. This is Transaldolase from Saccharopolyspora erythraea (strain ATCC 11635 / DSM 40517 / JCM 4748 / NBRC 13426 / NCIMB 8594 / NRRL 2338).